Reading from the N-terminus, the 72-residue chain is Conotoxin im23a (72 aa).

The first 22 residues, 1–22 (MIMRMTLTLFVLVVMTAASASG), serve as a signal peptide directing secretion. The propeptide occupies 23-28 (DALTEA). Intrachain disulfides connect Cys34-Cys41, Cys45-Cys55, and Cys56-Cys71.

It belongs to the conotoxin K superfamily. In terms of tissue distribution, expressed by the venom duct.

It localises to the secreted. Its function is as follows. Neurotoxin that induces excitatory symptoms in mice following intracranial administration. No symptoms are observed after intraperitoneal and intravenous (tail vein) injections. The sequence is that of Conotoxin im23a from Conus imperialis (Imperial cone).